The sequence spans 300 residues: Dioxygenase FUM3 (300 aa).

Fe cation contacts are provided by histidine 146, aspartate 148, and histidine 222.

This sequence belongs to the PhyH family. Homodimer. It depends on Fe cation as a cofactor.

It participates in mycotoxin biosynthesis. Functionally, dioxygenase; part of the gene cluster that mediates the biosynthesis of fumonisins B1 (FB1), B2 (FB2), B3 (FB3), and B4 (FB4), which are carcinogenic mycotoxins. Within the pathway, FUM3 performs the C-5 hydroxylation present in FB1 and FB2 and which occurs late in the biosynthesis. The biosynthesis starts with the FUM1-catalyzed carbon chain assembly from one molecule of acetyl-CoA, eight molecules of malonyl-CoA, and two molecules of methionine (in S-adenosyl form). The C18 polyketide chain is released from the enzyme by a nucleophilic attack of a carbanion, which is derived from R-carbon of alanine by decarboxylation, on the carbonyl carbon of polyketide acyl chain. This step is catalyzed by the pyridoxal 5'-phosphate-dependent aminoacyl transferase FUM8. The resultant 3-keto intermediate is then stereospecifically reduced to a 3-hydroxyl product by reductase FUM13. Subsequent oxidations at C-10 by the cytochrome P450 monooxygenase FUM2, C-14 and C-15 by FUM6, FUM12 or FUM15, tricarballylic esterification of the hydroxyl groups on C-14 and C-15 by acyltransferase FUM14, and C-5 hydroxylation by 2-keto-glutarate-dependent dioxygenase FUM3 furnish the biosynthesis of fumonisins. The tricarballylic moieties are most likely derived from the citric acid cycle, and their addition to the carbon backbone may involve FUM7, FUM10, FUM11 and FUM14. The protein is Dioxygenase FUM3 of Gibberella moniliformis (strain M3125 / FGSC 7600) (Maize ear and stalk rot fungus).